Here is a 111-residue protein sequence, read N- to C-terminus: Phosphoribosyl-ATP pyrophosphatase (111 aa).

Belongs to the PRA-PH family.

Its subcellular location is the cytoplasm. The enzyme catalyses 1-(5-phospho-beta-D-ribosyl)-ATP + H2O = 1-(5-phospho-beta-D-ribosyl)-5'-AMP + diphosphate + H(+). Its pathway is amino-acid biosynthesis; L-histidine biosynthesis; L-histidine from 5-phospho-alpha-D-ribose 1-diphosphate: step 2/9. The chain is Phosphoribosyl-ATP pyrophosphatase from Pseudomonas paraeruginosa (strain DSM 24068 / PA7) (Pseudomonas aeruginosa (strain PA7)).